The chain runs to 462 residues: Gamma-aminobutyric acid receptor subunit alpha-5 (462 aa).

The first 31 residues, 1–31 (MDNGMFSSFIMIKNLLLFCISMNLASHFGFS), serve as a signal peptide directing secretion. Topologically, residues 32–260 (QMPTSSVKAE…FHLKRKIGYF (229 aa)) are extracellular. N-linked (GlcNAc...) asparagine glycosylation occurs at Asn-45. Arg-101 is a binding site for 4-aminobutanoate. Asn-145 carries an N-linked (GlcNAc...) asparagine glycan. Thr-164 lines the 4-aminobutanoate pocket. A disulfide bridge connects residues Cys-173 and Cys-187. 2 N-linked (GlcNAc...) asparagine glycosylation sites follow: Asn-207 and Asn-236. 3 helical membrane passes run 261-281 (VIQT…SFWL), 287-308 (PART…ISAR), and 319-340 (AMDW…EFAT). Residues 341-427 (VNYFTKRGWA…TYNSISKIDK (87 aa)) are Cytoplasmic-facing. Lys-355 participates in a covalent cross-link: Glycyl lysine isopeptide (Lys-Gly) (interchain with G-Cter in ubiquitin). The interval 375-412 (TNAYTTGKMTHPPNIPKEQTPAGTTNASSASVKPEDKA) is disordered. Residues 395–405 (PAGTTNASSAS) are compositionally biased toward polar residues. Residues 428–448 (MSRIIFPLLFGTFNLVYWATY) traverse the membrane as a helical segment.

Belongs to the ligand-gated ion channel (TC 1.A.9) family. Gamma-aminobutyric acid receptor (TC 1.A.9.5) subfamily. GABRA5 sub-subfamily. As to quaternary structure, heteropentamer, formed by a combination of alpha (GABRA1-6), beta (GABRB1-3), gamma (GABRG1-3), delta (GABRD), epsilon (GABRE), rho (GABRR1-3), pi (GABRP) and theta (GABRQ) chains, each subunit exhibiting distinct physiological and pharmacological properties.

It localises to the postsynaptic cell membrane. Its subcellular location is the cell membrane. The catalysed reaction is chloride(in) = chloride(out). Alpha subunit of the heteropentameric ligand-gated chloride channel gated by gamma-aminobutyric acid (GABA), a major inhibitory neurotransmitter in the brain. GABA-gated chloride channels, also named GABA(A) receptors (GABAAR), consist of five subunits arranged around a central pore and contain GABA active binding site(s) located at the alpha and beta subunit interface(s). When activated by GABA, GABAARs selectively allow the flow of chloride anions across the cell membrane down their electrochemical gradient. GABAARs containing alpha-5/GABRA5 subunits are mainly extrasynaptic and contribute to the tonic GABAergic inhibition in the hippocampus. Extrasynaptic alpha-5-containing GABAARs in CA1 pyramidal neurons play a role in learning and memory processes. In Bos taurus (Bovine), this protein is Gamma-aminobutyric acid receptor subunit alpha-5 (GABRA5).